We begin with the raw amino-acid sequence, 335 residues long: Large ribosomal subunit protein uL10 (335 aa).

A disordered region spans residues 306-335 (VEETVEEEEEEEEEEDAEEEAAAGLGALFG). Over residues 308 to 326 (ETVEEEEEEEEEEDAEEEA) the composition is skewed to acidic residues.

The protein belongs to the universal ribosomal protein uL10 family. Part of the 50S ribosomal subunit. Forms part of the ribosomal stalk which helps the ribosome interact with GTP-bound translation factors. Forms a heptameric L10(L12)2(L12)2(L12)2 complex, where L10 forms an elongated spine to which the L12 dimers bind in a sequential fashion.

Forms part of the ribosomal stalk, playing a central role in the interaction of the ribosome with GTP-bound translation factors. The protein is Large ribosomal subunit protein uL10 of Methanobrevibacter smithii (strain ATCC 35061 / DSM 861 / OCM 144 / PS).